We begin with the raw amino-acid sequence, 206 residues long: ATP-dependent Clp protease proteolytic subunit 2 (206 aa).

Serine 100 (nucleophile) is an active-site residue. Histidine 125 is an active-site residue.

The protein belongs to the peptidase S14 family. In terms of assembly, fourteen ClpP subunits assemble into 2 heptameric rings which stack back to back to give a disk-like structure with a central cavity, resembling the structure of eukaryotic proteasomes.

It is found in the cytoplasm. The enzyme catalyses Hydrolysis of proteins to small peptides in the presence of ATP and magnesium. alpha-casein is the usual test substrate. In the absence of ATP, only oligopeptides shorter than five residues are hydrolyzed (such as succinyl-Leu-Tyr-|-NHMec, and Leu-Tyr-Leu-|-Tyr-Trp, in which cleavage of the -Tyr-|-Leu- and -Tyr-|-Trp bonds also occurs).. Its function is as follows. Cleaves peptides in various proteins in a process that requires ATP hydrolysis. Has a chymotrypsin-like activity. Plays a major role in the degradation of misfolded proteins. This is ATP-dependent Clp protease proteolytic subunit 2 from Myxococcus xanthus.